The primary structure comprises 213 residues: Endonuclease III (213 aa).

The HhH domain maps to 108–127 (FKELIKLPGVGRKTANVVLN). Cys187, Cys194, Cys197, and Cys203 together coordinate [4Fe-4S] cluster.

The protein belongs to the Nth/MutY family. [4Fe-4S] cluster serves as cofactor.

It carries out the reaction 2'-deoxyribonucleotide-(2'-deoxyribose 5'-phosphate)-2'-deoxyribonucleotide-DNA = a 3'-end 2'-deoxyribonucleotide-(2,3-dehydro-2,3-deoxyribose 5'-phosphate)-DNA + a 5'-end 5'-phospho-2'-deoxyribonucleoside-DNA + H(+). Functionally, DNA repair enzyme that has both DNA N-glycosylase activity and AP-lyase activity. The DNA N-glycosylase activity releases various damaged pyrimidines from DNA by cleaving the N-glycosidic bond, leaving an AP (apurinic/apyrimidinic) site. The AP-lyase activity cleaves the phosphodiester bond 3' to the AP site by a beta-elimination, leaving a 3'-terminal unsaturated sugar and a product with a terminal 5'-phosphate. This is Endonuclease III from Rickettsia felis (strain ATCC VR-1525 / URRWXCal2) (Rickettsia azadi).